A 148-amino-acid chain; its full sequence is 3-dehydroquinate dehydratase (148 aa).

The active-site Proton acceptor is the Tyr-23. The substrate site is built by Asn-75, His-81, and Asp-88. Residue His-101 is the Proton donor of the active site. Residues 102–103 and Arg-112 contribute to the substrate site; that span reads LS.

This sequence belongs to the type-II 3-dehydroquinase family. As to quaternary structure, homododecamer.

It carries out the reaction 3-dehydroquinate = 3-dehydroshikimate + H2O. Its pathway is metabolic intermediate biosynthesis; chorismate biosynthesis; chorismate from D-erythrose 4-phosphate and phosphoenolpyruvate: step 3/7. Catalyzes a trans-dehydration via an enolate intermediate. The chain is 3-dehydroquinate dehydratase from Xanthomonas campestris pv. campestris (strain 8004).